The following is a 334-amino-acid chain: Geranylgeranyl pyrophosphate synthase idtG (334 aa).

Isopentenyl diphosphate-binding residues include K49, R52, and H81. D88 and D92 together coordinate Mg(2+). A dimethylallyl diphosphate-binding site is contributed by R97. Isopentenyl diphosphate is bound at residue R98. Dimethylallyl diphosphate contacts are provided by K175, T176, and Q209. D212 is a binding site for Mg(2+). Residues N216, K226, and K236 each coordinate dimethylallyl diphosphate.

The protein belongs to the FPP/GGPP synthase family. The cofactor is Mg(2+).

It carries out the reaction isopentenyl diphosphate + dimethylallyl diphosphate = (2E)-geranyl diphosphate + diphosphate. The catalysed reaction is isopentenyl diphosphate + (2E)-geranyl diphosphate = (2E,6E)-farnesyl diphosphate + diphosphate. The enzyme catalyses isopentenyl diphosphate + (2E,6E)-farnesyl diphosphate = (2E,6E,10E)-geranylgeranyl diphosphate + diphosphate. Its pathway is secondary metabolite biosynthesis. Its function is as follows. Geranylgeranyl pyrophosphate synthase; part of the gene cluster that mediates the biosynthesis of paspalitrems, indole-diterpene (IDT) mycotoxins that are potent tremorgens in mammals. The geranylgeranyl diphosphate (GGPP) synthase idtG is proposed to catalyze the first step in IDT biosynthesis via catalysis of a series of iterative condensations of isopentenyl diphosphate (IPP) with dimethylallyl diphosphate (DMAPP), geranyl diphosphate (GPP), and farnesyl diphosphate (FPP), to form GGPP. Condensation of indole-3-glycerol phosphate with GGPP by the prenyltransferase idtC then forms 3-geranylgeranylindole (3-GGI). Epoxidation of the two terminal alkenes of the geranylgeranyl moiety by the FAD-dependent monooxygenase idtM, and cyclization by the terpene cyclase idtB then leads to the production of paspaline. The cytochrome P450 monooxygenase idtP then catalyzes oxidative elimination of the pendant methyl group at C-12 of paspaline and generates the C-10 ketone to yield 13-desoxypaxilline. The cytochrome P450 monooxygenase idtQ may catalyze the C-13 oxidation of 13-desoxypaxilline to afford paxilline. Considering that both paspalicine and paxilline were detected in C.paspali, idtQ also catalyzes the formation of paspalinine from 13-desoxypaxilline via paspalicine as an intermediate. Finally, the alpha-prenyltransferase idtF prenylates paspalinine at the C-20 or the C-21 positions to yield paspalitrems A and C, respectively. The hydroxylation of paspalitrem A at C-32 by a still unknown oxidase affords paspalitrem B. This chain is Geranylgeranyl pyrophosphate synthase idtG, found in Claviceps paspali (Rye ergot fungus).